Consider the following 426-residue polypeptide: Serine--tRNA ligase (426 aa).

Residue 231-233 (TSE) coordinates L-serine. 262-264 (RSE) contacts ATP. Residue E285 participates in L-serine binding. Residue 349–352 (EISS) coordinates ATP. S385 provides a ligand contact to L-serine.

This sequence belongs to the class-II aminoacyl-tRNA synthetase family. Type-1 seryl-tRNA synthetase subfamily. Homodimer. The tRNA molecule binds across the dimer.

Its subcellular location is the cytoplasm. It carries out the reaction tRNA(Ser) + L-serine + ATP = L-seryl-tRNA(Ser) + AMP + diphosphate + H(+). It catalyses the reaction tRNA(Sec) + L-serine + ATP = L-seryl-tRNA(Sec) + AMP + diphosphate + H(+). The protein operates within aminoacyl-tRNA biosynthesis; selenocysteinyl-tRNA(Sec) biosynthesis; L-seryl-tRNA(Sec) from L-serine and tRNA(Sec): step 1/1. Catalyzes the attachment of serine to tRNA(Ser). Is also able to aminoacylate tRNA(Sec) with serine, to form the misacylated tRNA L-seryl-tRNA(Sec), which will be further converted into selenocysteinyl-tRNA(Sec). In Legionella pneumophila (strain Corby), this protein is Serine--tRNA ligase.